Consider the following 306-residue polypeptide: Pantothenate kinase (306 aa).

Position 91 to 98 (91 to 98 (GSVAVGKS)) interacts with ATP.

It belongs to the prokaryotic pantothenate kinase family.

It is found in the cytoplasm. It catalyses the reaction (R)-pantothenate + ATP = (R)-4'-phosphopantothenate + ADP + H(+). Its pathway is cofactor biosynthesis; coenzyme A biosynthesis; CoA from (R)-pantothenate: step 1/5. This is Pantothenate kinase from Streptococcus pneumoniae (strain JJA).